We begin with the raw amino-acid sequence, 387 residues long: 1-deoxy-D-xylulose 5-phosphate reductoisomerase (387 aa).

Thr10, Gly11, Ser12, Ile13, and Asn124 together coordinate NADPH. Lys125 is a binding site for 1-deoxy-D-xylulose 5-phosphate. Glu126 provides a ligand contact to NADPH. Asp150 serves as a coordination point for Mn(2+). 1-deoxy-D-xylulose 5-phosphate contacts are provided by Ser151, Glu152, Ser176, and His199. Glu152 serves as a coordination point for Mn(2+). NADPH is bound at residue Gly205. 1-deoxy-D-xylulose 5-phosphate-binding residues include Ser212, Asn217, Lys218, and Glu221. Glu221 is a Mn(2+) binding site.

Belongs to the DXR family. Requires Mg(2+) as cofactor. It depends on Mn(2+) as a cofactor.

It carries out the reaction 2-C-methyl-D-erythritol 4-phosphate + NADP(+) = 1-deoxy-D-xylulose 5-phosphate + NADPH + H(+). It participates in isoprenoid biosynthesis; isopentenyl diphosphate biosynthesis via DXP pathway; isopentenyl diphosphate from 1-deoxy-D-xylulose 5-phosphate: step 1/6. Functionally, catalyzes the NADPH-dependent rearrangement and reduction of 1-deoxy-D-xylulose-5-phosphate (DXP) to 2-C-methyl-D-erythritol 4-phosphate (MEP). The protein is 1-deoxy-D-xylulose 5-phosphate reductoisomerase of Clostridium beijerinckii (strain ATCC 51743 / NCIMB 8052) (Clostridium acetobutylicum).